Reading from the N-terminus, the 236-residue chain is SERTA domain-containing protein 1 (236 aa).

The segment at 1–20 (MLSKGLKRKREEEEEKEPLA) is disordered. Residues 38–85 (PAVASSSLFDLSVLKLHHSLQQSEPDLRHLVLVVNTLRRIQASMAPAA) enclose the SERTA domain. The segment at 189-211 (PASEGLKPGPEDGPGKEEAPELD) is disordered. Positions 197–207 (GPEDGPGKEEA) are enriched in basic and acidic residues.

In terms of assembly, interacts with the PHD-bromodomain of TIF1, TRIM28/TIF1B and p300/CBP. Interacts with E2F1 and TFDP1; modulates transactivation activity of TFDP1/E2F complexes. Also interacts with CDK4. Polyubiquitinated, which promotes proteasomal degradation.

Acts at E2F-responsive promoters as coregulator to integrate signals provided by PHD- and/or bromodomain-containing transcription factors. Stimulates E2F1/TFDP1 transcriptional activity. Renders the activity of cyclin D1/CDK4 resistant to the inhibitory effects of CDKN2A/p16INK4A. The protein is SERTA domain-containing protein 1 (SERTAD1) of Homo sapiens (Human).